Consider the following 404-residue polypeptide: Tryptophan synthase beta chain (404 aa).

An N6-(pyridoxal phosphate)lysine modification is found at lysine 98.

Belongs to the TrpB family. Tetramer of two alpha and two beta chains. The cofactor is pyridoxal 5'-phosphate.

The catalysed reaction is (1S,2R)-1-C-(indol-3-yl)glycerol 3-phosphate + L-serine = D-glyceraldehyde 3-phosphate + L-tryptophan + H2O. It functions in the pathway amino-acid biosynthesis; L-tryptophan biosynthesis; L-tryptophan from chorismate: step 5/5. The beta subunit is responsible for the synthesis of L-tryptophan from indole and L-serine. The polypeptide is Tryptophan synthase beta chain (Rhodopseudomonas palustris (strain BisA53)).